Consider the following 75-residue polypeptide: Chaplin-D (75 aa).

The signal sequence occupies residues 1-23 (MKKSAAVVAGAIMALGMAAPAFA). The region spanning 34 to 74 (SPGVLSGNVIQVPVHVPVNVCGNSINVVGLLNPAFGNKCEN) is the Chaplin domain. C54 and C72 form a disulfide bridge.

This sequence belongs to the chaplin family. Short chaplin subfamily.

It localises to the cell surface. The protein resides in the secreted. Its subcellular location is the cell wall. The protein localises to the fimbrium. In terms of biological role, one of 8 partially redundant surface-active proteins required for efficient formation of aerial mycelium; the short chaplins assemble into a hydrophobic, amyloidal fibrillar surface layer that envelopes and protects aerial hyphae and spores, presumably anchored to the long chaplins. Chaplins have an overlapping function with the surface-active SapB peptide; chaplins are essential on minimal medium while on rich medium both chaplins and SapB are required for efficient aerial hyphae formation. Chaplins are also involved in cell attachment to a hydrophobic surface. Forms amyloid fibrils in vitro probably composed of stacked beta-sheets, at low extracellular concentrations individually restores the ability to form aerial hyphae to a chaplin-deficient strain. A small chaplin extract (ChpD, ChpE, ChpF, ChpG and ChpH) self-assembles into 2 different amyloids; small fibrils at the air-water interface form an amphipathic membrane that resembles spore-surface structures involved in aerial hyphae formation, and hydrophilic fibrils in solution that resemble the fibers that attach cells to a hydrophobic surface. At the air-water interface the hydrophilic surface is in contact with water (probably equivalent to the peptidoglycan layer), while the hydrophobic face is exposed to the air, making the surface of the aerial hyphae hydrophobic. A minimal chaplin strain capable of forming aerial mycelium/hyphae on minimal medium contains ChpC, ChpE and ChpH. The strain also has restored rodlet formation on the hyphae surface. A second minimal chaplin strain with ChpA, ChpD and ChpE makes slightly less robust hyphae. A small chaplin extract applied to a chaplin-deficient strain restores aerial hyphae formation. The small chaplin extract forms an amyloid-like structure similar to that seen on the surface of cells without rodlets (rdlA-rdlB deletions), and is highly surface active, reducing surface tension from 72 to 26 mJ/m(2), which probably allows escape of hyphae from an aqueous environment into air. The sequence is that of Chaplin-D from Streptomyces coelicolor (strain ATCC BAA-471 / A3(2) / M145).